The following is a 282-amino-acid chain: Probable septum site-determining protein MinC (282 aa).

A disordered region spans residues 103–147 (SQSRRGGKDEAPKEKAGKPEATAASGQTDAEAAGNTGKGKDSEGA). The segment covering 104-120 (QSRRGGKDEAPKEKAGK) has biased composition (basic and acidic residues).

The protein belongs to the MinC family. In terms of assembly, interacts with MinD and FtsZ.

In terms of biological role, cell division inhibitor that blocks the formation of polar Z ring septums. Rapidly oscillates between the poles of the cell to destabilize FtsZ filaments that have formed before they mature into polar Z rings. Prevents FtsZ polymerization. This is Probable septum site-determining protein MinC from Cupriavidus metallidurans (strain ATCC 43123 / DSM 2839 / NBRC 102507 / CH34) (Ralstonia metallidurans).